A 72-amino-acid polypeptide reads, in one-letter code: uncharacterized protein (72 aa).

At 1-12 (MSKHKHEWTESV) the chain is on the cytoplasmic side. A helical membrane pass occupies residues 13–32 (ANSGPASILSYCASSILMTV). The Lumenal segment spans residues 33 to 46 (TNKFVVNLDNFNMN). Residues 47-69 (FVMLFVQSLVCTVTLCILRIVGV) form a helical membrane-spanning segment. Residues 70 to 72 (ANF) are Cytoplasmic-facing.

It belongs to the TPT transporter family. SLC35D subfamily.

It is found in the membrane. This is an uncharacterized protein from Saccharomyces cerevisiae (strain RM11-1a) (Baker's yeast).